A 66-amino-acid polypeptide reads, in one-letter code: Stress-induced protein KIN1 (66 aa).

The segment covering 1–13 (MSETNKNAFQAGQ) has biased composition (polar residues). A disordered region spans residues 1–52 (MSETNKNAFQAGQTAGKAEEKSNVLLDKAKDAAAGAGAGAQQAGKSVSDAAA). Over residues 17–31 (KAEEKSNVLLDKAKD) the composition is skewed to basic and acidic residues. 2 repeats span residues 31–35 (DAAAG) and 49–53 (DAAAG). Low complexity predominate over residues 32-45 (AAAGAGAGAQQAGK).

The sequence is that of Stress-induced protein KIN1 (KIN1) from Arabidopsis thaliana (Mouse-ear cress).